The chain runs to 457 residues: Multidrug resistance protein MdtK (457 aa).

The Cytoplasmic segment spans residues 1 to 10 (MQKYISEARL). Residues 11–31 (LLALAIPVILAQIAQTAMGFV) traverse the membrane as a helical segment. The Periplasmic portion of the chain corresponds to 32 to 52 (DTVMAGGYSATDMAAVAIGTS). The helical transmembrane segment at 53–73 (IWLPAILFGHGLLLALTPVIA) threads the bilayer. Over 74 to 92 (QLNGSGRRERIAHQVRQGF) the chain is Cytoplasmic. A helical transmembrane segment spans residues 93 to 113 (WLAGFVSVLIMLVLWNAGYII). The Periplasmic segment spans residues 114–126 (RYMENIDPALADK). The chain crosses the membrane as a helical span at residues 127-147 (AVGYLRALLWGAPGYLFFQVA). The Cytoplasmic portion of the chain corresponds to 148–159 (RNQCEGLAKAKP). Residues 160–180 (GMVMGFIGLLVNIPVNYIFIY) form a helical membrane-spanning segment. Topologically, residues 181–188 (GHFGMPEL) are periplasmic. The helical transmembrane segment at 189-209 (GGVGCGVATAAVYWVMFLAMV) threads the bilayer. The Cytoplasmic segment spans residues 210-242 (SYIKRARSMRDIRNEKGTAKPEPAVMKRLIQLG). Residues 243-263 (LPIALALFLEVTLFAVVALLV) traverse the membrane as a helical segment. Residues 264 to 275 (SPLGIVDVAGHQ) are Periplasmic-facing. A helical membrane pass occupies residues 276 to 296 (IALNFSSLMFVLPMSLAAAVT). Over 297-313 (IRVGYRLGQGSTLDAQT) the chain is Cytoplasmic. A helical membrane pass occupies residues 314–334 (AARTGLMVGVCMATLTAIFTV). At 335–349 (SLREQIALLYNDNPE) the chain is on the periplasmic side. A helical membrane pass occupies residues 350–370 (VVTLAAHLMLLAAVYQISDSI). Residues 371-386 (QVIGSGILRGYKDTRS) lie on the Cytoplasmic side of the membrane. Residues 387–407 (IFYITFTAYWVLGLPSGYILA) form a helical membrane-spanning segment. At 408–417 (LTDLVVEPMG) the chain is on the periplasmic side. Residues 418-438 (PAGFWIGFIIGLTSAAIMMML) form a helical membrane-spanning segment. Topologically, residues 439-457 (RMRFLQRMPSAIILQRASR) are cytoplasmic.

It belongs to the multi antimicrobial extrusion (MATE) (TC 2.A.66.1) family. MdtK subfamily.

It localises to the cell inner membrane. Its function is as follows. Multidrug efflux pump that functions probably as a Na(+)/drug antiporter. The protein is Multidrug resistance protein MdtK of Shigella flexneri serotype 5b (strain 8401).